A 288-amino-acid polypeptide reads, in one-letter code: uncharacterized protein (288 aa).

Residues 5–81 (GNVLNKIGSL…LELSIELATK (77 aa)) form the HTH rpiR-type domain. Residues 41–60 (LSEIAKHLQVGEATLVRFCR) constitute a DNA-binding region (H-T-H motif). An SIS domain is found at 129–269 (VVKVLKKARR…YALLVQGEED (141 aa)).

This is an uncharacterized protein from Haemophilus influenzae (strain ATCC 51907 / DSM 11121 / KW20 / Rd).